Here is a 540-residue protein sequence, read N- to C-terminus: Phosphomethylpyrimidine synthase (540 aa).

Residues Asn-143, Met-172, Tyr-201, His-237, 257–259, 298–301, and Glu-337 each bind substrate; these read SRG and DGLR. His-341 provides a ligand contact to Zn(2+). Residue Tyr-364 participates in substrate binding. His-405 is a binding site for Zn(2+). [4Fe-4S] cluster-binding residues include Cys-485, Cys-488, and Cys-493.

The protein belongs to the ThiC family. [4Fe-4S] cluster serves as cofactor.

It carries out the reaction 5-amino-1-(5-phospho-beta-D-ribosyl)imidazole + S-adenosyl-L-methionine = 4-amino-2-methyl-5-(phosphooxymethyl)pyrimidine + CO + 5'-deoxyadenosine + formate + L-methionine + 3 H(+). The protein operates within cofactor biosynthesis; thiamine diphosphate biosynthesis. Functionally, catalyzes the synthesis of the hydroxymethylpyrimidine phosphate (HMP-P) moiety of thiamine from aminoimidazole ribotide (AIR) in a radical S-adenosyl-L-methionine (SAM)-dependent reaction. In Mycobacterium avium (strain 104), this protein is Phosphomethylpyrimidine synthase.